The chain runs to 171 residues: MSGLQGPSVGDGCNGGGARAGGSCCRRRCFRGFGRRVQGAAFPGRQPAELGPVPRGLPAAAAPVCPAASAAAAGGILASEHSRGPSAAGGHPGPAASEPVLPPLPGPQRRATPGHTGCLSPGCPDQPARWSEWPGPSGPPGPELQQPGDTAGLCPADARSGCALAVSQLPL.

Disordered regions lie at residues 1-22 (MSGL…RAGG) and 76-156 (ILAS…LCPA). Over residues 84-99 (GPSAAGGHPGPAASEP) the composition is skewed to low complexity.

Interacts with calpain-2 catalytic subunit CAPN2. In terms of processing, cleaved in vitro following UV irradiation to induce caspase-mediated apoptosis and this cleavage is inhibited by a broad-spectrum caspase inhibitor.

The protein resides in the cytoplasm. Its subcellular location is the cytoskeleton. The protein is PIDD1 alternative open reading frame protein of Homo sapiens (Human).